Consider the following 893-residue polypeptide: DNA mismatch repair protein MutS (893 aa).

Position 631 to 638 (631 to 638) interacts with ATP; the sequence is GPNMAGKS. A disordered region spans residues 821 to 858; sequence AGRPRVAVRQPQGGRRGASTGQLGLFGMEPAQGGTGVT.

It belongs to the DNA mismatch repair MutS family.

In terms of biological role, this protein is involved in the repair of mismatches in DNA. It is possible that it carries out the mismatch recognition step. This protein has a weak ATPase activity. The polypeptide is DNA mismatch repair protein MutS (Myxococcus xanthus (strain DK1622)).